Here is an 845-residue protein sequence, read N- to C-terminus: ATPase morc-1 (845 aa).

Residues N43, 88–90 (SAK), and 97–103 (RYGNGLK) contribute to the ATP site. N43 contributes to the Mg(2+) binding site. Residues 284-311 (AAYNKILDEKNETVKKCEEEKALVMSEI) are a coiled coil. Position 422 (K422) interacts with ATP. Disordered stretches follow at residues 566–590 (LPQK…SASS) and 628–739 (KMEP…GKAV). The segment covering 574-590 (SAPSSSDSQNSIRSASS) has biased composition (low complexity). The segment covering 637-646 (HDSHIAEVQR) has biased composition (basic and acidic residues).

In terms of assembly, predominantly forms monomers and dimers, but multimerizes to form trimers and tetramers upon DNA binding. Expressed in germline and somatic cells.

The protein resides in the nucleus. The protein localises to the nuclear body. The enzyme catalyses ATP + H2O = ADP + phosphate + H(+). Its function is as follows. Binds non-specifically to DNA and forms static foci which grow by recruiting other morc-1 molecules, and thereby stimulates conformational changes and compaction of DNA, which appears to be enhanced by ATP-binding, but does not require ATP activity. Preferentially binds to long DNAs. Compacts and entraps segments of DNA by sequentially forming loops along the DNA, beginning at the free ends of single- and double-tethered DNA. Does not extrude the DNA loops on compacted double-tethered DNA. Involved in gene silencing. Plays a role in germline RNA interference (RNAi), and in particular, the silencing of endogenous small interfering RNA (endo-siRNA) target genes. May play a role in heterochromatin localization and condensation, and the siRNAi-directed trimethylation of 'Lys-9' of histone H3 in hermaphrodite X chromosomes. Promotes transgenerational epigenetic inheritance and germline immortality. This chain is ATPase morc-1, found in Caenorhabditis elegans.